Reading from the N-terminus, the 160-residue chain is 2-C-methyl-D-erythritol 2,4-cyclodiphosphate synthase (160 aa).

A divalent metal cation-binding residues include Asp-10 and His-12. Residues 10 to 12 and 36 to 37 contribute to the 4-CDP-2-C-methyl-D-erythritol 2-phosphate site; these read DVH and HS. His-44 serves as a coordination point for a divalent metal cation. 4-CDP-2-C-methyl-D-erythritol 2-phosphate is bound by residues 58-60, 134-137, Phe-141, and Arg-144; these read DIG and TTTE.

The protein belongs to the IspF family. Homotrimer. The cofactor is a divalent metal cation.

The catalysed reaction is 4-CDP-2-C-methyl-D-erythritol 2-phosphate = 2-C-methyl-D-erythritol 2,4-cyclic diphosphate + CMP. Its pathway is isoprenoid biosynthesis; isopentenyl diphosphate biosynthesis via DXP pathway; isopentenyl diphosphate from 1-deoxy-D-xylulose 5-phosphate: step 4/6. Involved in the biosynthesis of isopentenyl diphosphate (IPP) and dimethylallyl diphosphate (DMAPP), two major building blocks of isoprenoid compounds. Catalyzes the conversion of 4-diphosphocytidyl-2-C-methyl-D-erythritol 2-phosphate (CDP-ME2P) to 2-C-methyl-D-erythritol 2,4-cyclodiphosphate (ME-CPP) with a corresponding release of cytidine 5-monophosphate (CMP). This chain is 2-C-methyl-D-erythritol 2,4-cyclodiphosphate synthase, found in Phocaeicola vulgatus (strain ATCC 8482 / DSM 1447 / JCM 5826 / CCUG 4940 / NBRC 14291 / NCTC 11154) (Bacteroides vulgatus).